Consider the following 459-residue polypeptide: Cysteine--tRNA ligase (459 aa).

A Zn(2+)-binding site is contributed by cysteine 28. The 'HIGH' region motif lies at 30–40 (ITIYDLCHIGH). Positions 209, 234, and 238 each coordinate Zn(2+). Residues 266 to 270 (KMSKS) carry the 'KMSKS' region motif. Lysine 269 serves as a coordination point for ATP.

Belongs to the class-I aminoacyl-tRNA synthetase family. In terms of assembly, monomer. It depends on Zn(2+) as a cofactor.

The protein resides in the cytoplasm. It catalyses the reaction tRNA(Cys) + L-cysteine + ATP = L-cysteinyl-tRNA(Cys) + AMP + diphosphate. In Shewanella woodyi (strain ATCC 51908 / MS32), this protein is Cysteine--tRNA ligase.